Reading from the N-terminus, the 182-residue chain is Bifunctional protein PyrR (182 aa).

Positions 99–111 match the PRPP-binding motif; the sequence is VVLVDDVLFTGRT.

Belongs to the purine/pyrimidine phosphoribosyltransferase family. PyrR subfamily.

It carries out the reaction UMP + diphosphate = 5-phospho-alpha-D-ribose 1-diphosphate + uracil. Regulates the transcription of the pyrimidine nucleotide (pyr) operon in response to exogenous pyrimidines. Its function is as follows. Also displays a weak uracil phosphoribosyltransferase activity which is not physiologically significant. In Chloroflexus aurantiacus (strain ATCC 29366 / DSM 635 / J-10-fl), this protein is Bifunctional protein PyrR.